The sequence spans 285 residues: Bifunctional protein FolD (285 aa).

Residues 165–167, S190, and I231 each bind NADP(+); that span reads GRS.

The protein belongs to the tetrahydrofolate dehydrogenase/cyclohydrolase family. Homodimer.

It carries out the reaction (6R)-5,10-methylene-5,6,7,8-tetrahydrofolate + NADP(+) = (6R)-5,10-methenyltetrahydrofolate + NADPH. The catalysed reaction is (6R)-5,10-methenyltetrahydrofolate + H2O = (6R)-10-formyltetrahydrofolate + H(+). The protein operates within one-carbon metabolism; tetrahydrofolate interconversion. Functionally, catalyzes the oxidation of 5,10-methylenetetrahydrofolate to 5,10-methenyltetrahydrofolate and then the hydrolysis of 5,10-methenyltetrahydrofolate to 10-formyltetrahydrofolate. This is Bifunctional protein FolD from Verminephrobacter eiseniae (strain EF01-2).